Here is a 974-residue protein sequence, read N- to C-terminus: Ovochymase-2 (974 aa).

The N-terminal stretch at 1–21 is a signal peptide; the sequence is MAETSIFPIMMLTVMIGVGRG. The propeptide at 22 to 49 is activation peptide; the sequence is VTDSPGRVSRCGERPAANTSVSYGLLSR. The N-linked (GlcNAc...) asparagine glycan is linked to Asn39. One can recognise a Peptidase S1 1 domain in the interval 50–299; sequence IVGGTSAVKG…LLNWLSENLN (250 aa). The cysteines at positions 75 and 91 are disulfide-linked. Catalysis depends on His90, which acts as the Charge relay system. Ca(2+) is bound by residues Val112 and Glu117. Asp140 serves as the catalytic Charge relay system. 11 cysteine pairs are disulfide-bonded: Cys174–Cys244, Cys205–Cys223, Cys234–Cys263, Cys312–Cys342, Cys369–Cys388, Cys435–Cys462, Cys489–Cys510, Cys615–Cys631, Cys713–Cys776, Cys741–Cys754, and Cys766–Cys795. The active-site Charge relay system is the Ser238. CUB domains are found at residues 312–425 and 435–547; these read CSTN…YEAV and CGSV…ISFV. A Peptidase S1 2 domain is found at 590–819; that stretch reads LIKAEEAMPN…FIPWIMETIL (230 aa). Positions 590–974 are cleaved as a propeptide — activation peptide; that stretch reads LIKAEEAMPN…WLSYSFHNQN (385 aa). An N-linked (GlcNAc...) asparagine glycan is attached at Asn763. Positions 830–858 are disordered; that stretch reads EPHHPLFPPDKPSQQKALLPDSPPSSSSQ. A glycan (N-linked (GlcNAc...) asparagine) is linked at Asn926.

It belongs to the peptidase S1 family. The catalytically inactive 107 kDa form is processed both N- and C-terminally to give rise to the 66 kDa catalytically active form and inactive forms of 82 kDa and 59 kDa. In terms of tissue distribution, expressed specifically in the cells lining the bottom of epithelial folds in the oviductal pars recta.

The protein resides in the secreted. It catalyses the reaction Preferential cleavage at 371-Gly-Ser-Arg-|-Trp-374 of glycoprotein gp43 in Xenopus laevis coelemic egg envelope to yield gp41.. Its function is as follows. Mediates gamete interaction by affecting the vitelline coat. This chain is Ovochymase-2 (OVCH2), found in Bufo japonicus (Japanese common toad).